The following is a 2090-amino-acid chain: Nuclear pore complex protein Nup214 (2090 aa).

At G2 the chain carries N-acetylglycine. At S30 the chain carries Phosphoserine. 7 Blade repeats span residues 41-93, 94-150, 151-193, 194-239, 240-303, 304-359, and 360-404; these read LLAV…PMKF, PIHH…DAGG, MVID…PSTV, AVTS…ESDH, PVRV…ERQH, HYYL…KSDD, and SLPM…FYMI. A seven-bladed beta propeller region spans residues 41-404; sequence LLAVSNKYGL…DGVLCPFYMI (364 aa). The 44 X 2 AA repeats of F-G stretch occupies residues 236-1418; that stretch reads ESDHPVRVLD…AVFGSLPVTS (1183 aa). T416 is subject to Phosphothreonine. A phosphoserine mark is found at S421, S430, and S433. Positions 422-460 are disordered; sequence LEGERQPKSPGSTPTTPTSSQAPQKLDASAAAAPASLPP. The segment covering 429–441 has biased composition (low complexity); that stretch reads KSPGSTPTTPTSS. 3 positions are modified to phosphothreonine: T434, T437, and T439. The tract at residues 450-586 is (Microbial infection) Binds human adenovirus 5 (HAdV-5) protein L3 (hexon); the sequence is SAAAAPASLP…PPSTSAVKVN (137 aa). Residues 481–2076 form an 11 X 5 AA approximate repeats region; sequence VFSFGSSSLK…GSGTGGFSFG (1596 aa). Repeat 1 spans residues 484 to 485; that stretch reads FG. Composition is skewed to low complexity over residues 489–513 and 524–536; these read LKSS…KAAP and PPSK…TPAA. Residues 489 to 536 are disordered; sequence LKSSATVTGEPPSYSSGSDSSKAAPGPGPSTFSFVPPSKASLAPTPAA. The stretch at 548–549 is repeat 2; that stretch reads FG. Composition is skewed to low complexity over residues 597–629 and 637–658; these read STPV…HPTP and VPLK…SSSP. The tract at residues 597–700 is disordered; that stretch reads STPVSSSQSA…KQGHQWKDSD (104 aa). S651, S657, and S666 each carry phosphoserine. T670 is modified (phosphothreonine). S678 is subject to Phosphoserine. Residues 680 to 1209 adopt a coiled-coil conformation; that stretch reads QAKSLQPAVA…VTSTPSASGQ (530 aa). Residues 691–700 are compositionally biased toward basic and acidic residues; it reads KQGHQWKDSD. 2 leucine-zipper regions span residues 740-768 and 861-882; these read LRTE…ISSL and LANN…VDSL. Position 760 is a phosphoserine (S760). Residues S940, S970, S974, and S989 each carry the phosphoserine modification. The interval 987–1009 is disordered; sequence TSSVSQSLESEDARTSCKDDEAV. Over residues 997–1007 the composition is skewed to basic and acidic residues; sequence EDARTSCKDDE. At T1021 the chain carries Phosphothreonine. Phosphoserine occurs at positions 1023, 1045, 1056, and 1081. Positions 1128 to 1149 are enriched in polar residues; the sequence is LKNNPATPSTAMGSSVPYSTAK. The interval 1128–1152 is disordered; sequence LKNNPATPSTAMGSSVPYSTAKTPH. Phosphothreonine is present on residues T1134, T1150, and T1156. 2 stretches are compositionally biased toward polar residues: residues 1168 to 1188 and 1199 to 1213; these read LINS…SSGD and AVTS…FSKP. A disordered region spans residues 1168–1213; sequence LINSLKPSGPTPASGQLSSGDKASGTAKIETAVTSTPSASGQFSKP. S1181 is modified (phosphoserine). Copy 3 of the repeat occupies 1225–1226; sequence FG. Composition is skewed to polar residues over residues 1234 to 1254 and 1273 to 1285; these read SNFT…QPDA and PPSG…NTTP. 2 disordered regions span residues 1234 to 1316 and 1337 to 1408; these read SNFT…PPSK and LRVG…TSST. Low complexity predominate over residues 1288 to 1299; sequence PAASSSRPVAPS. The segment covering 1301-1310 has biased composition (polar residues); sequence TALSTTSSKL. T1312 carries the phosphothreonine modification. A compositionally biased stretch (polar residues) spans 1347 to 1368; that stretch reads KPTNKASSTSLTSTQPTKTSGV. S1353 carries the post-translational modification Phosphoserine. A compositionally biased stretch (low complexity) spans 1386 to 1408; it reads PPVTSSATTTSVAPPAATSTSST. Residues 1409-2084 form an 18 X 4 AA approximate repeats region; that stretch reads AVFGSLPVTS…FGSNNSSVQG (676 aa). 4 consecutive repeat copies span residues 1411–1412, 1427–1428, 1441–1442, and 1473–1474. The interval 1427–2085 is 11 X 3 AA approximate repeats; that stretch reads FGGTSLSAGK…GSNNSSVQGF (659 aa). Polar residues predominate over residues 1438 to 1450; that stretch reads SFSFGSQQTNSTV. A disordered region spans residues 1438–1467; sequence SFSFGSQQTNSTVPPSAPPPTTAATPLPTS. 2 stretches are compositionally biased toward low complexity: residues 1479–1489 and 1508–1527; these read SATTPSLPMSA and SEVS…AQLP. The tract at residues 1479–1539 is disordered; the sequence is SATTPSLPMS…PPQTSDSVKK (61 aa). A Glycyl lysine isopeptide (Lys-Gly) (interchain with G-Cter in SUMO2) cross-link involves residue K1538. 18 repeat units span residues 1635-1636, 1674-1675, 1686-1687, 1713-1714, 1721-1722, 1726-1727, 1732-1733, 1756-1757, 1772-1773, 1786-1787, 1798-1799, 1806-1807, 1812-1813, 1819-1820, 1842-1843, 1851-1852, 1862-1863, and 1874-1875. The tract at residues 1884–1903 is disordered; the sequence is GFFSGLGGKPSQDAANKNPF. A run of 5 repeats spans residues 1910–1911, 1922–1923, 1930–1931, 1938–1939, and 1959–1960. Phosphoserine is present on S1963. 3 consecutive repeat copies span residues 1970–1971, 1976–1977, and 1982–1983. The residue at position 1985 (S1985) is a Phosphoserine. A run of 11 repeats spans residues 1988–1989, 1994–1995, 2012–2013, 2024–2025, 2026–2027, 2035–2036, 2046–2047, 2056–2057, 2066–2067, 2075–2076, and 2085–2086.

In terms of assembly, homodimer. Part of the nuclear pore complex (NPC). Interacts with NUP88. Interacts with ZFP36; this interaction increases upon lipopolysaccharide (LPS) stimulation. Interacts with DDX19. Interacts with XPO1. Interacts with XPO5. As to quaternary structure, (Microbial infection) Interacts with human herpes virus 1 (HHV-1) protein UL25; this interaction might be essential to the capsid docking onto the host nuclear pore. (Microbial infection) Interacts (via N-terminus) with human adenovirus 5 (HAdV-5) protein L3 (hexon); this interaction might be essential for the release of the virus genome to the nucleus. Probably glycosylated as it reacts with wheat germ agglutinin (WGA). As to expression, expressed in thymus, spleen, bone marrow, kidney, brain and testis, but hardly in all other tissues or in whole embryos during development.

Its subcellular location is the nucleus. The protein resides in the nuclear pore complex. In terms of biological role, part of the nuclear pore complex. Has a critical role in nucleocytoplasmic transport. May serve as a docking site in the receptor-mediated import of substrates across the nuclear pore complex. Its function is as follows. (Microbial infection) Required for capsid disassembly of the human adenovirus 5 (HadV-5) leading to release of the viral genome to the nucleus (in vitro). In Homo sapiens (Human), this protein is Nuclear pore complex protein Nup214 (NUP214).